The following is a 156-amino-acid chain: Myosin regulatory light chain, striated adductor muscle (156 aa).

Ala-1 bears the Blocked amino end (Ala) mark. 2 EF-hand domains span residues 15–50 (KQIQEMKEAFSMLDVDRDGFVNKDDLKAISEQLGRT) and 84–119 (DSEETIRNAFAMFDELETKKLNIEYIKDLLENMGDN). 4 residues coordinate Ca(2+): Asp-28, Asp-30, Asp-32, and Asp-39.

Functionally, in molluscan muscle, calcium regulation is associated with myosin rather than with actin. Muscle myosin contains two types of light chains: the catalytic light chain, essential for ATPase activity, and the regulatory light chain, a calcium-binding protein responsible for Ca(2+) dependent binding and Ca(2+) dependent Mg-ATPase activity. In Chlamys nipponensis akazara (Akazara scallop), this protein is Myosin regulatory light chain, striated adductor muscle.